The chain runs to 23 residues: VAIIIYSMYGHIAKYGNFPGQWK.

This Coniferiporia sulphurascens (Laminated root rot fungus) protein is Unknown protein 1.